Consider the following 724-residue polypeptide: Catalase-peroxidase (724 aa).

The segment at 1–20 (MDENKTKPAGKCPVMHGGNT) is disordered. Residues 98 to 225 (WHSAGTYRTA…LAAVQMGLIY (128 aa)) constitute a cross-link (tryptophyl-tyrosyl-methioninium (Trp-Tyr) (with M-251)). Residue His99 is the Proton acceptor of the active site. The tryptophyl-tyrosyl-methioninium (Tyr-Met) (with W-98) cross-link spans 225–251 (YVNPEGVDGNPDPLRTAQDMRVTFSRM). His266 contacts heme b.

The protein belongs to the peroxidase family. Peroxidase/catalase subfamily. As to quaternary structure, homodimer or homotetramer. Heme b serves as cofactor. Post-translationally, formation of the three residue Trp-Tyr-Met cross-link is important for the catalase, but not the peroxidase activity of the enzyme.

It catalyses the reaction H2O2 + AH2 = A + 2 H2O. It carries out the reaction 2 H2O2 = O2 + 2 H2O. Bifunctional enzyme with both catalase and broad-spectrum peroxidase activity. This chain is Catalase-peroxidase, found in Pectobacterium carotovorum subsp. carotovorum (strain PC1).